The chain runs to 144 residues: 3-hydroxyacyl-[acyl-carrier-protein] dehydratase FabZ (144 aa).

His48 is a catalytic residue.

The protein belongs to the thioester dehydratase family. FabZ subfamily.

It localises to the cytoplasm. It catalyses the reaction a (3R)-hydroxyacyl-[ACP] = a (2E)-enoyl-[ACP] + H2O. Involved in unsaturated fatty acids biosynthesis. Catalyzes the dehydration of short chain beta-hydroxyacyl-ACPs and long chain saturated and unsaturated beta-hydroxyacyl-ACPs. This chain is 3-hydroxyacyl-[acyl-carrier-protein] dehydratase FabZ, found in Bacillus anthracis (strain A0248).